The chain runs to 278 residues: Large ribosomal subunit protein uL24m (278 aa).

A KOW domain is found at F109 to D142.

This sequence belongs to the universal ribosomal protein uL24 family.

Its subcellular location is the mitochondrion. In Caenorhabditis briggsae, this protein is Large ribosomal subunit protein uL24m (mrpl-24).